Reading from the N-terminus, the 260-residue chain is Kallikrein-8 (260 aa).

Positions 1 to 28 (MGRPPPCAIQPWILLLLFMGAWAGLTRA) are cleaved as a signal peptide. A propeptide spanning residues 29-32 (QGSK) is cleaved from the precursor. One can recognise a Peptidase S1 domain in the interval 33–257 (ILEGRECIPH…YTTWIKKTMD (225 aa)). Intrachain disulfides connect Cys-39-Cys-173, Cys-58-Cys-74, Cys-145-Cys-246, Cys-152-Cys-218, Cys-184-Cys-198, and Cys-208-Cys-233. His-73 (charge relay system) is an active-site residue. An N-linked (GlcNAc...) asparagine glycan is attached at Asn-110. Catalysis depends on Asp-120, which acts as the Charge relay system. The active-site Charge relay system is Ser-212.

It belongs to the peptidase S1 family. Kallikrein subfamily. In terms of assembly, interacts with SPINK9. As to expression, expressed in the limbic system of mouse brain and is localized at highest concentration in pyramidal neurons of the hippocampal CA1-3 subfields. Also detected in spinal cord gray matter and in keratinized stratified epithelia of epidermis, hair, tongue, palate, nasal cavity, pharynges, esophagus and forestomach. In skin and mucus membranes, expressed in stratum spinosum and stratum granulosum. Expressed during estrus in vaginal epithelial cells but not stromal cells. Within the vaginal epithelium, expressed in prickle cells, granular cells and parakeratotic cells but not in basal cells. Not expressed in uterus. Expressed in the keratinocytes.

The protein resides in the secreted. The protein localises to the cytoplasm. The catalysed reaction is Cleavage of amide substrates following the basic amino acids Arg or Lys at the P1 position, with a preference for Arg over Lys.. Strongly inhibited by diisopropyl fluorophosphate, leupeptin and (4-amidinophenyl)methanesulfonyl 1-fluoride. Serine protease which is capable of degrading a number of proteins such as casein, fibrinogen, kininogen, fibronectin and collagen type IV. Also cleaves L1CAM in response to increased neural activity. Induces neurite outgrowth and fasciculation of cultured hippocampal neurons. Plays a role in the formation and maturation of orphan and small synaptic boutons in the Schaffer-collateral pathway, regulates Schaffer-collateral long-term potentiation in the hippocampus and is required for memory acquisition and synaptic plasticity. Involved in skin desquamation and keratinocyte proliferation. Plays a role in the secondary phase of pathogenesis following spinal cord injury. The sequence is that of Kallikrein-8 (Klk8) from Mus musculus (Mouse).